Reading from the N-terminus, the 508-residue chain is Pyruvate kinase 2 (508 aa).

Residue Arg50 coordinates substrate. Residues Asn52, Ser54, Asp85, and Thr86 each coordinate K(+). Position 52–55 (52–55 (NFSH)) interacts with ATP. Positions 92 and 178 each coordinate ATP. Glu243 is a binding site for Mg(2+). Gly266, Asp267, and Thr299 together coordinate substrate. Asp267 is a Mg(2+) binding site.

It belongs to the pyruvate kinase family. As to quaternary structure, homotetramer. Mg(2+) is required as a cofactor. The cofactor is K(+).

It carries out the reaction pyruvate + ATP = phosphoenolpyruvate + ADP + H(+). It participates in carbohydrate degradation; glycolysis; pyruvate from D-glyceraldehyde 3-phosphate: step 5/5. The polypeptide is Pyruvate kinase 2 (PYK2) (Candida glabrata (strain ATCC 2001 / BCRC 20586 / JCM 3761 / NBRC 0622 / NRRL Y-65 / CBS 138) (Yeast)).